The sequence spans 454 residues: UPF0210 protein Mhun_2657 (454 aa).

This sequence belongs to the UPF0210 family.

This chain is UPF0210 protein Mhun_2657, found in Methanospirillum hungatei JF-1 (strain ATCC 27890 / DSM 864 / NBRC 100397 / JF-1).